A 370-amino-acid chain; its full sequence is Sensor histidine kinase DesK (370 aa).

Topologically, residues Met-1 to Lys-10 are extracellular. Residues Leu-11–Trp-31 form a helical membrane-spanning segment. Over Lys-32–Thr-36 the chain is Cytoplasmic. The chain crosses the membrane as a helical span at residues Phe-37 to Phe-57. At Val-58 to Leu-70 the chain is on the extracellular side. Residues Leu-71–Ile-91 form a helical membrane-spanning segment. The Cytoplasmic segment spans residues Ala-92–Pro-103. The helical transmembrane segment at Phe-104–Val-124 threads the bilayer. The Extracellular portion of the chain corresponds to Leu-125–Glu-128. A helical membrane pass occupies residues Phe-129 to Phe-149. Topologically, residues Ser-150 to Lys-370 are cytoplasmic. The 184-residue stretch at Asp-186–Ser-369 folds into the Histidine kinase domain. At His-188 the chain carries Phosphohistidine; by autocatalysis.

It localises to the cell membrane. The catalysed reaction is ATP + protein L-histidine = ADP + protein N-phospho-L-histidine.. Its function is as follows. Member of the two-component regulatory system DesR/DesK, responsible for cold induction of the des gene coding for the Delta5 acyl-lipid desaturase. Acts as a sensor of the membrane fluidity. Probably activates DesR by phosphorylation. The chain is Sensor histidine kinase DesK (desK) from Bacillus subtilis (strain 168).